The primary structure comprises 131 residues: MATDRRVSRVSSLIKREVSQMLLHGIKDDRVGAGMVSITDVDVSGDLQHAKIFVSIYGTEQAKAETMEGLKSSVGFVRRELGQRIRLRRTPEVVFLEDTSLERGDRTLHLLNQLQDARKEEDEYIEPAQDD.

It belongs to the RbfA family. Monomer. Binds 30S ribosomal subunits, but not 50S ribosomal subunits or 70S ribosomes.

Its subcellular location is the cytoplasm. Its function is as follows. One of several proteins that assist in the late maturation steps of the functional core of the 30S ribosomal subunit. Associates with free 30S ribosomal subunits (but not with 30S subunits that are part of 70S ribosomes or polysomes). Required for efficient processing of 16S rRNA. May interact with the 5'-terminal helix region of 16S rRNA. This is Ribosome-binding factor A from Gloeothece citriformis (strain PCC 7424) (Cyanothece sp. (strain PCC 7424)).